A 248-amino-acid polypeptide reads, in one-letter code: 3-deoxy-manno-octulosonate cytidylyltransferase (248 aa).

It belongs to the KdsB family.

The protein localises to the cytoplasm. It catalyses the reaction 3-deoxy-alpha-D-manno-oct-2-ulosonate + CTP = CMP-3-deoxy-beta-D-manno-octulosonate + diphosphate. The protein operates within nucleotide-sugar biosynthesis; CMP-3-deoxy-D-manno-octulosonate biosynthesis; CMP-3-deoxy-D-manno-octulosonate from 3-deoxy-D-manno-octulosonate and CTP: step 1/1. It functions in the pathway bacterial outer membrane biogenesis; lipopolysaccharide biosynthesis. In terms of biological role, activates KDO (a required 8-carbon sugar) for incorporation into bacterial lipopolysaccharide in Gram-negative bacteria. This chain is 3-deoxy-manno-octulosonate cytidylyltransferase, found in Klebsiella pneumoniae subsp. pneumoniae (strain ATCC 700721 / MGH 78578).